We begin with the raw amino-acid sequence, 117 residues long: UPF0251 protein cbdbA217 (117 aa).

This sequence belongs to the UPF0251 family.

The protein is UPF0251 protein cbdbA217 of Dehalococcoides mccartyi (strain CBDB1).